The primary structure comprises 398 residues: Probable peptidoglycan glycosyltransferase FtsW (398 aa).

Topologically, residues 1 to 20 are cytoplasmic; the sequence is MSTQAIRGARGLVLKWGAGR. Residues 21–41 traverse the membrane as a helical segment; sequence FYLDTVLLSVSLGLMLFGFVM. The Periplasmic portion of the chain corresponds to 42-57; it reads VSSASLHLGEKMASDS. The chain crosses the membrane as a helical span at residues 58 to 78; sequence FYFPKHQLVHILLGLAAGWGA. Residues 79 to 92 lie on the Cytoplasmic side of the membrane; sequence ARVRLDTLERHSRS. Residues 93–113 traverse the membrane as a helical segment; it reads LFWAGIALLVLVLIPGVGKSV. At 114–121 the chain is on the periplasmic side; the sequence is NGSVRWIN. A helical membrane pass occupies residues 122–142; the sequence is LFGLRVQVSEVFKLVAAIYVA. Topologically, residues 143-153 are cytoplasmic; the sequence is GYISRHLDTVR. A helical membrane pass occupies residues 154–174; the sequence is TSVKGMIFPLSLLAIGAVLLL. The Periplasmic portion of the chain corresponds to 175–177; sequence KEP. Residues 178–198 form a helical membrane-spanning segment; it reads DFGATAVVMATALGMLFLAGA. A topological domain (cytoplasmic) is located at residue Arg-199. A helical transmembrane segment spans residues 200–220; sequence LWVFVGLLGLVAVAGTVLIYT. At 221-289 the chain is on the periplasmic side; it reads AEYRLRRVLS…LFSVIGEELG (69 aa). The helical transmembrane segment at 290-310 threads the bilayer; it reads LWGATTVILLFAIVVWRALAI. At 311–318 the chain is on the cytoplasmic side; that stretch reads GRLAERSG. The helical transmembrane segment at 319 to 339 threads the bilayer; sequence NLFAAFLAYGIGIWLGLQSFI. The Periplasmic portion of the chain corresponds to 340–355; it reads NMGVNMGMLPTKGLTL. The chain crosses the membrane as a helical span at residues 356–376; that stretch reads PLMSYGGGSMMVVCAAIGLLF. Residues 377–398 lie on the Cytoplasmic side of the membrane; the sequence is RIRSEAVASFLGNGRKGLWPGV.

Belongs to the SEDS family. FtsW subfamily.

It localises to the cell inner membrane. The enzyme catalyses [GlcNAc-(1-&gt;4)-Mur2Ac(oyl-L-Ala-gamma-D-Glu-L-Lys-D-Ala-D-Ala)](n)-di-trans,octa-cis-undecaprenyl diphosphate + beta-D-GlcNAc-(1-&gt;4)-Mur2Ac(oyl-L-Ala-gamma-D-Glu-L-Lys-D-Ala-D-Ala)-di-trans,octa-cis-undecaprenyl diphosphate = [GlcNAc-(1-&gt;4)-Mur2Ac(oyl-L-Ala-gamma-D-Glu-L-Lys-D-Ala-D-Ala)](n+1)-di-trans,octa-cis-undecaprenyl diphosphate + di-trans,octa-cis-undecaprenyl diphosphate + H(+). It participates in cell wall biogenesis; peptidoglycan biosynthesis. Its function is as follows. Peptidoglycan polymerase that is essential for cell division. The sequence is that of Probable peptidoglycan glycosyltransferase FtsW from Methylococcus capsulatus (strain ATCC 33009 / NCIMB 11132 / Bath).